A 367-amino-acid polypeptide reads, in one-letter code: Phospho-N-acetylmuramoyl-pentapeptide-transferase (367 aa).

A run of 10 helical transmembrane segments spans residues Ile13 to Leu33, Leu49 to Leu69, Met95 to Ala115, Leu119 to Ile139, Leu154 to Ala174, Trp183 to Val203, Ile215 to Ala235, Thr237 to Ala257, Ala281 to Val301, and Val347 to Phe367.

It belongs to the glycosyltransferase 4 family. MraY subfamily. The cofactor is Mg(2+).

The protein resides in the cell inner membrane. The catalysed reaction is UDP-N-acetyl-alpha-D-muramoyl-L-alanyl-gamma-D-glutamyl-meso-2,6-diaminopimeloyl-D-alanyl-D-alanine + di-trans,octa-cis-undecaprenyl phosphate = di-trans,octa-cis-undecaprenyl diphospho-N-acetyl-alpha-D-muramoyl-L-alanyl-D-glutamyl-meso-2,6-diaminopimeloyl-D-alanyl-D-alanine + UMP. It participates in cell wall biogenesis; peptidoglycan biosynthesis. Functionally, catalyzes the initial step of the lipid cycle reactions in the biosynthesis of the cell wall peptidoglycan: transfers peptidoglycan precursor phospho-MurNAc-pentapeptide from UDP-MurNAc-pentapeptide onto the lipid carrier undecaprenyl phosphate, yielding undecaprenyl-pyrophosphoryl-MurNAc-pentapeptide, known as lipid I. The sequence is that of Phospho-N-acetylmuramoyl-pentapeptide-transferase from Trichormus variabilis (strain ATCC 29413 / PCC 7937) (Anabaena variabilis).